A 150-amino-acid polypeptide reads, in one-letter code: Macrodomain Ter protein (150 aa).

Belongs to the MatP family. In terms of assembly, homodimer.

It localises to the cytoplasm. In terms of biological role, required for spatial organization of the terminus region of the chromosome (Ter macrodomain) during the cell cycle. Prevents early segregation of duplicated Ter macrodomains during cell division. Binds specifically to matS, which is a 13 bp signature motif repeated within the Ter macrodomain. This Klebsiella pneumoniae (strain 342) protein is Macrodomain Ter protein.